Consider the following 646-residue polypeptide: Serine/threonine-protein kinase sck2 (646 aa).

Disordered regions lie at residues 17-85 (VSTN…LPEV) and 143-176 (GRDI…IQRT). Residues 68–80 (SDQSTVGNRNSND) show a composition bias toward polar residues. Residues 149–165 (SSRDSANVSRSSSMMSS) show a composition bias toward low complexity. Positions 266–527 (FVPLKLIGKG…VEEVMKHPFF (262 aa)) constitute a Protein kinase domain. ATP contacts are provided by residues 272-280 (IGKGTFGQV) and Lys-295. Catalysis depends on Asp-392, which acts as the Proton acceptor. An AGC-kinase C-terminal domain is found at 528–605 (DGIDWKKLAA…IDASAMDEAF (78 aa)). A disordered region spans residues 609–646 (NSNDSASSISSQDDYSKDNSDMDLNRANDEVFMGQIDP). Residues 610 to 621 (SNDSASSISSQD) show a composition bias toward low complexity. Over residues 622 to 637 (DYSKDNSDMDLNRAND) the composition is skewed to basic and acidic residues.

This sequence belongs to the protein kinase superfamily. AGC Ser/Thr protein kinase family. PKC subfamily.

The catalysed reaction is L-seryl-[protein] + ATP = O-phospho-L-seryl-[protein] + ADP + H(+). The enzyme catalyses L-threonyl-[protein] + ATP = O-phospho-L-threonyl-[protein] + ADP + H(+). Its function is as follows. Protein kinase that is part of growth control pathway which is at least partially redundant with the cAMP pathway. In Schizosaccharomyces pombe (strain 972 / ATCC 24843) (Fission yeast), this protein is Serine/threonine-protein kinase sck2 (sck2).